Consider the following 333-residue polypeptide: DNA-directed RNA polymerase subunit alpha (333 aa).

The alpha N-terminal domain (alpha-NTD) stretch occupies residues 1-233 (MVQEKLRFST…DLFIPFLHAE (233 aa)). Residues 266–333 (KKEIALKSIF…DILKIQKYFT (68 aa)) form an alpha C-terminal domain (alpha-CTD) region.

Belongs to the RNA polymerase alpha chain family. As to quaternary structure, in plastids the minimal PEP RNA polymerase catalytic core is composed of four subunits: alpha, beta, beta', and beta''. When a (nuclear-encoded) sigma factor is associated with the core the holoenzyme is formed, which can initiate transcription.

The protein resides in the plastid. It is found in the chloroplast. It carries out the reaction RNA(n) + a ribonucleoside 5'-triphosphate = RNA(n+1) + diphosphate. Functionally, DNA-dependent RNA polymerase catalyzes the transcription of DNA into RNA using the four ribonucleoside triphosphates as substrates. This chain is DNA-directed RNA polymerase subunit alpha, found in Phaseolus angularis (Azuki bean).